The following is a 603-amino-acid chain: Mono(2-hydroxyethyl) terephthalate hydrolase (603 aa).

The N-terminal stretch at 1–17 (MQTTVTTMLLASVALAA) is a signal peptide. Cys18 carries N-palmitoyl cysteine lipidation. Residue Cys18 is the site of S-diacylglycerol cysteine attachment. Residues 24–44 (TPLPLPQQQPPQQEPPPPPVP) form a disordered region. Pro residues predominate over residues 26 to 44 (LPLPQQQPPQQEPPPPPVP). Cys51 and Cys92 are oxidised to a cystine. Gly132 contacts 4-[(2-hydroxyethoxy)carbonyl]benzoate. Cystine bridges form between Cys224–Cys529, Cys303–Cys320, Cys340–Cys348, and Cys577–Cys599. Ser225 (acyl-ester intermediate) is an active-site residue. Glu226 lines the 4-[(2-hydroxyethoxy)carbonyl]benzoate pocket. Ca(2+) is bound by residues Asp304, Asp307, Leu309, Asp311, and Ile313. 4-[(2-hydroxyethoxy)carbonyl]benzoate-binding residues include Arg411 and Ser416. Active-site charge relay system residues include Asp492 and His528. A 4-[(2-hydroxyethoxy)carbonyl]benzoate-binding site is contributed by His528.

The protein belongs to the tannase family.

It is found in the cell outer membrane. It carries out the reaction 4-[(2-hydroxyethoxy)carbonyl]benzoate + H2O = terephthalate + ethylene glycol + H(+). In terms of biological role, involved in the degradation and assimilation of the plastic poly(ethylene terephthalate) (PET), which allows I.sakaiensis to use PET as its major energy and carbon source for growth. Likely acts synergistically with PETase to depolymerize PET. Catalyzes the hydrolysis of mono(2-hydroxyethyl) terephthalate (MHET) into its two environmentally benign monomers, terephthalate and ethylene glycol. Does not show activity against PET, bis(hydroxyethyl) terephthalate (BHET), pNP-aliphatic esters or typical aromatic ester compounds catalyzed by the tannase family enzymes, such as ethyl gallate and ethyl ferulate. The sequence is that of Mono(2-hydroxyethyl) terephthalate hydrolase from Piscinibacter sakaiensis (Ideonella sakaiensis).